We begin with the raw amino-acid sequence, 177 residues long: Small ribosomal subunit protein uS5 (177 aa).

Positions 19–82 (WQERVVQIRR…ADGKKQLVEV (64 aa)) constitute an S5 DRBM domain.

Belongs to the universal ribosomal protein uS5 family. Part of the 30S ribosomal subunit. Contacts proteins S4 and S8.

Functionally, with S4 and S12 plays an important role in translational accuracy. Located at the back of the 30S subunit body where it stabilizes the conformation of the head with respect to the body. The protein is Small ribosomal subunit protein uS5 of Acaryochloris marina (strain MBIC 11017).